Reading from the N-terminus, the 448-residue chain is T-box transcription factor TBX19 (448 aa).

Positions 45–218 form a DNA-binding region, T-box; sequence LEDAPLWQRF…YNPFAKAFLD (174 aa).

It is found in the nucleus. In terms of biological role, transcriptional regulator involved in developmental processes. Can activate POMC gene expression and repress the alpha glycoprotein subunit and thyroid-stimulating hormone beta promoters. This chain is T-box transcription factor TBX19, found in Homo sapiens (Human).